The chain runs to 147 residues: Hemoglobin subunit beta (147 aa).

Val2 bears the N-acetylvaline mark. Positions 3–147 constitute a Globin domain; that stretch reads HLTPEEKSAV…VANALAHKYH (145 aa). The residue at position 13 (Thr13) is a Phosphothreonine. Ser45 is modified (phosphoserine). At Lys60 the chain carries N6-acetyllysine. His64 lines the heme b pocket. An N6-acetyllysine modification is found at Lys83. Heme b is bound at residue His93. Cys94 is subject to S-nitrosocysteine. Position 145 is an N6-acetyllysine (Lys145).

Belongs to the globin family. Heterotetramer of two alpha chains and two beta chains. Red blood cells.

Involved in oxygen transport from the lung to the various peripheral tissues. The polypeptide is Hemoglobin subunit beta (HBB) (Gorilla gorilla gorilla (Western lowland gorilla)).